A 192-amino-acid polypeptide reads, in one-letter code: Ferritin-like protein (192 aa).

Residues histidine 44, glutamate 48, and histidine 102 each coordinate Fe(3+). Positions 143–179 (RFDHDYADPHAHHDEHRDHLADMPSAGSSHEEVQPVA) are linker. The span at 149-163 (ADPHAHHDEHRDHLA) shows a compositional bias: basic and acidic residues. A disordered region spans residues 149–192 (ADPHAHHDEHRDHLADMPSAGSSHEEVQPVAHKKKGFTVGSLIQ). Residues 180 to 192 (HKKKGFTVGSLIQ) form a targeting peptide region.

Homodimer, with 2 Fe atoms bound at the subunit interface (without encapsulin), probably also a dimer when encapsulated. 42 electron-dense accretions can be seen inside the nanocompartment which are probably this cargo protein, although perhaps up to one cargo dimer can be bound per shell protein.

The protein localises to the encapsulin nanocompartment. It carries out the reaction 4 Fe(2+) + O2 + 4 H(+) = 4 Fe(3+) + 2 H2O. Its function is as follows. Cargo protein of a type 1 encapsulin nanocompartment. A ferritin-like iron-binding protein probably involved in iron mineralization in the encapsulin nanocompartment. Has ferroxidase activity even when encapsulated, the rate is probably controlled by the rate of Fe flux across the nanocompartment pores. Part of the iron-mineralizing encapsulin-associated Firmicute (IMEF) system. 2 different cargo proteins have been identified (IMEF and Fer); when both are expressed in E.coli with the shell protein only IMEF is detected within the nanocompartment. E.coli expressing all 3 genes stores the largest amount of iron and is protected from Fe/H2O2-induced oxidative stress. In Bacillus thermotolerans (Quasibacillus thermotolerans), this protein is Ferritin-like protein.